Reading from the N-terminus, the 688-residue chain is Eukaryotic translation initiation factor 3 subunit B (688 aa).

The segment at 1–28 is disordered; it reads MAKKKGDQYDSDGAEDQDYDEEPVFEDP. The span at 9 to 25 shows a compositional bias: acidic residues; it reads YDSDGAEDQDYDEEPVF. In terms of domain architecture, RRM spans 57-141; sequence NVIVVDNIPV…HTLLVNLFSD (85 aa). WD repeat units lie at residues 208–246, 247–287, 291–329, 332–367, 440–482, and 527–572; these read RERF…KINK, FAHS…EKRS, DGSS…LLDK, IKVQ…TLLE, EVKE…EPTM, and GDHY…KRVN. The stretch at 612–643 forms a coiled coil; it reads DRVRMTRASKELLEKRAKLREQFVEYRAKRVN.

Belongs to the eIF-3 subunit B family. In terms of assembly, component of the eukaryotic translation initiation factor 3 (eIF-3) complex.

It localises to the cytoplasm. In terms of biological role, RNA-binding component of the eukaryotic translation initiation factor 3 (eIF-3) complex, which is involved in protein synthesis of a specialized repertoire of mRNAs and, together with other initiation factors, stimulates binding of mRNA and methionyl-tRNAi to the 40S ribosome. The eIF-3 complex specifically targets and initiates translation of a subset of mRNAs involved in cell proliferation. This is Eukaryotic translation initiation factor 3 subunit B from Culex quinquefasciatus (Southern house mosquito).